A 1057-amino-acid polypeptide reads, in one-letter code: Carbamoyl phosphate synthase large chain (1057 aa).

Residues 1–401 (MPKRDDIQTI…SLLKAIRSLE (401 aa)) are carboxyphosphate synthetic domain. Residues R129, R169, G175, G176, K208, I210, E215, G241, I242, H243, Q284, and E298 each contribute to the ATP site. Residues 133–327 (RSLMNDLNVP…IAKLAAKIAV (195 aa)) form the ATP-grasp 1 domain. Q284, E298, and N300 together coordinate Mg(2+). 3 residues coordinate Mn(2+): Q284, E298, and N300. The interval 402 to 546 (YGVHHLGLPN…YGTYETENES (145 aa)) is oligomerization domain. The tract at residues 547 to 929 (IVTDKEKILV…ALYKGLTGSG (383 aa)) is carbamoyl phosphate synthetic domain. The ATP-grasp 2 domain maps to 671-861 (EALLHTIDVP…MAQLAMQAIM (191 aa)). Residues R707, R746, L748, E752, G777, V778, H779, S780, Q820, and E832 each contribute to the ATP site. Mg(2+)-binding residues include Q820, E832, and N834. Q820, E832, and N834 together coordinate Mn(2+). An MGS-like domain is found at 930-1057 (VEVKDHGTVL…ESMTFSMRTM (128 aa)). An allosteric domain region spans residues 930–1057 (VEVKDHGTVL…ESMTFSMRTM (128 aa)).

The protein belongs to the CarB family. In terms of assembly, composed of two chains; the small (or glutamine) chain promotes the hydrolysis of glutamine to ammonia, which is used by the large (or ammonia) chain to synthesize carbamoyl phosphate. Tetramer of heterodimers (alpha,beta)4. Mg(2+) is required as a cofactor. It depends on Mn(2+) as a cofactor.

The catalysed reaction is hydrogencarbonate + L-glutamine + 2 ATP + H2O = carbamoyl phosphate + L-glutamate + 2 ADP + phosphate + 2 H(+). It catalyses the reaction hydrogencarbonate + NH4(+) + 2 ATP = carbamoyl phosphate + 2 ADP + phosphate + 2 H(+). It participates in amino-acid biosynthesis; L-arginine biosynthesis; carbamoyl phosphate from bicarbonate: step 1/1. Its pathway is pyrimidine metabolism; UMP biosynthesis via de novo pathway; (S)-dihydroorotate from bicarbonate: step 1/3. Its function is as follows. Large subunit of the glutamine-dependent carbamoyl phosphate synthetase (CPSase). CPSase catalyzes the formation of carbamoyl phosphate from the ammonia moiety of glutamine, carbonate, and phosphate donated by ATP, constituting the first step of 2 biosynthetic pathways, one leading to arginine and/or urea and the other to pyrimidine nucleotides. The large subunit (synthetase) binds the substrates ammonia (free or transferred from glutamine from the small subunit), hydrogencarbonate and ATP and carries out an ATP-coupled ligase reaction, activating hydrogencarbonate by forming carboxy phosphate which reacts with ammonia to form carbamoyl phosphate. This is Carbamoyl phosphate synthase large chain from Staphylococcus haemolyticus (strain JCSC1435).